A 305-amino-acid chain; its full sequence is GTPase Era (305 aa).

One can recognise an Era-type G domain in the interval Arg11 to Glu181. The tract at residues Gly19–Ser26 is G1. Residue Gly19–Ser26 coordinates GTP. The G2 stretch occupies residues Glu45 to His49. Residues Asp66–Gly69 are G3. Residues Asp66–Leu70 and Thr130–Asp133 each bind GTP. The G4 stretch occupies residues Thr130–Asp133. The tract at residues Val160–Ser162 is G5. In terms of domain architecture, KH type-2 spans Leu212–Lys291.

It belongs to the TRAFAC class TrmE-Era-EngA-EngB-Septin-like GTPase superfamily. Era GTPase family. As to quaternary structure, monomer.

It is found in the cytoplasm. The protein localises to the cell membrane. In terms of biological role, an essential GTPase that binds both GDP and GTP, with rapid nucleotide exchange. Plays a role in 16S rRNA processing and 30S ribosomal subunit biogenesis and possibly also in cell cycle regulation and energy metabolism. The sequence is that of GTPase Era from Corynebacterium glutamicum (strain ATCC 13032 / DSM 20300 / JCM 1318 / BCRC 11384 / CCUG 27702 / LMG 3730 / NBRC 12168 / NCIMB 10025 / NRRL B-2784 / 534).